The following is a 336-amino-acid chain: Phosphoribosylformylglycinamidine cyclo-ligase (336 aa).

Belongs to the AIR synthase family.

It is found in the cytoplasm. The enzyme catalyses 2-formamido-N(1)-(5-O-phospho-beta-D-ribosyl)acetamidine + ATP = 5-amino-1-(5-phospho-beta-D-ribosyl)imidazole + ADP + phosphate + H(+). It functions in the pathway purine metabolism; IMP biosynthesis via de novo pathway; 5-amino-1-(5-phospho-D-ribosyl)imidazole from N(2)-formyl-N(1)-(5-phospho-D-ribosyl)glycinamide: step 2/2. The chain is Phosphoribosylformylglycinamidine cyclo-ligase from Caldanaerobacter subterraneus subsp. tengcongensis (strain DSM 15242 / JCM 11007 / NBRC 100824 / MB4) (Thermoanaerobacter tengcongensis).